Here is a 66-residue protein sequence, read N- to C-terminus: Large ribosomal subunit protein bL33c (66 aa).

Belongs to the bacterial ribosomal protein bL33 family.

It localises to the plastid. It is found in the chloroplast. The chain is Large ribosomal subunit protein bL33c from Calycanthus floridus var. glaucus (Eastern sweetshrub).